A 95-amino-acid chain; its full sequence is Putative regulatory protein STH1338 (95 aa).

Belongs to the RemA family.

The protein is Putative regulatory protein STH1338 of Symbiobacterium thermophilum (strain DSM 24528 / JCM 14929 / IAM 14863 / T).